Reading from the N-terminus, the 354-residue chain is Guanine nucleotide-binding protein G(t) subunit alpha-3 (354 aa).

The disordered stretch occupies residues 1 to 27; the sequence is MGSGISSESKESAKRSKELEKKLQEDA. Gly-2 is lipidated: N-myristoyl glycine. Basic and acidic residues predominate over residues 8–27; that stretch reads ESKESAKRSKELEKKLQEDA. The G-alpha domain occupies 32-354; that stretch reads RTVKLLLLGA…KENLKDCGLF (323 aa). Positions 35 to 48 are G1 motif; the sequence is KLLLLGAGESGKST. Residues 40–47, 175–181, 200–204, 269–272, and Ala-326 each bind GTP; these read GAGESGKS, LHSRVKT, DVGGQ, and NKKD. Mg(2+) is bound by residues Ser-47 and Thr-181. The segment at 173–181 is G2 motif; that stretch reads DVLHSRVKT. The segment at 196–205 is G3 motif; sequence FRMFDVGGQR. Residues 265-272 are G4 motif; sequence VLFLNKKD. Residues 324–329 are G5 motif; that stretch reads TCATDT.

It belongs to the G-alpha family. G(i/o/t/z) subfamily. As to quaternary structure, g proteins are composed of 3 units; alpha, beta and gamma, respectively GNAT3, GNB1 and GNG13 for Gustducin heterotrimer for bitter taste transduction. The alpha chain contains the guanine nucleotide binding site. Component of the TAS2R14-GNAT3 complex, consisting of TAS2R14, GNAT3, GNB1 and GNG2; within the complex interacts with TAS2R14; this complex plays a role in the perception of bitterness. Gustducin heterotrimer may also be composed of GNAT3, GNB3 and GNG13. Potential N-myristoylation may anchor alpha-subunit to the inner surface of plasma membrane. Expressed in taste buds (sensory organs of clustered epithelial cells) of the circumvallate and foliate papillae of the tongue at protein level. Expressed in enteroendocrine L cells of the gut. Detected also in spermatozoa.

Its subcellular location is the cytoplasm. Its function is as follows. Guanine nucleotide-binding protein (G protein) alpha subunit playing a prominent role in bitter and sweet taste transduction as well as in umami (monosodium glutamate, monopotassium glutamate, and inosine monophosphate) taste transduction. Transduction by this alpha subunit involves coupling of specific cell-surface receptors with a cGMP-phosphodiesterase; Activation of phosphodiesterase lowers intracellular levels of cAMP and cGMP which may open a cyclic nucleotide-suppressible cation channel leading to influx of calcium, ultimately leading to release of neurotransmitter. Indeed, denatonium and strychnine induce transient reduction in cAMP and cGMP in taste tissue, whereas this decrease is inhibited by GNAT3 antibody. Gustducin heterotrimer transduces response to bitter and sweet compounds via regulation of phosphodiesterase for alpha subunit, as well as via activation of phospholipase C for beta and gamma subunits, with ultimate increase inositol trisphosphate and increase of intracellular Calcium. GNAT3 can functionally couple to taste receptors to transmit intracellular signal: receptor heterodimer TAS1R2/TAS1R3 senses sweetness and TAS1R1/TAS1R3 transduces umami taste, whereas the T2R family GPCRs such as TAS2R14 act as bitter sensors. Also functions as lumenal sugar sensors in the gut to control the expression of the Na+-glucose transporter SGLT1 in response to dietaty sugar, as well as the secretion of Glucagon-like peptide-1, GLP-1 and glucose-dependent insulinotropic polypeptide, GIP. Thus, may modulate the gut capacity to absorb sugars, with implications in malabsorption syndromes and diet-related disorders including diabetes and obesity. This is Guanine nucleotide-binding protein G(t) subunit alpha-3 (GNAT3) from Homo sapiens (Human).